Reading from the N-terminus, the 656-residue chain is Macrolide export ATP-binding/permease protein MacB (656 aa).

The region spanning 6–244 is the ABC transporter domain; the sequence is LEVSACYRSF…AAPKTEVIPA (239 aa). Position 42 to 49 (42 to 49) interacts with ATP; that stretch reads GASGSGKS. The next 4 membrane-spanning stretches (helical) occupy residues 277 to 297, 531 to 551, 586 to 606, and 621 to 641; these read FLTMLGIIIGIASVVSVVALG, LLISAIAVISLVVGGIGVMNI, LVCLCGGALGVALAYLIGVVF, and SIVAAFACSTLIGVLFGFLPA.

Belongs to the ABC transporter superfamily. Macrolide exporter (TC 3.A.1.122) family. In terms of assembly, homodimer. Part of the tripartite efflux system MacAB-TolC, which is composed of an inner membrane transporter, MacB, a periplasmic membrane fusion protein, MacA, and an outer membrane component, TolC. The complex forms a large protein conduit and can translocate molecules across both the inner and outer membranes. Interacts with MacA.

It is found in the cell inner membrane. Part of the tripartite efflux system MacAB-TolC. MacB is a non-canonical ABC transporter that contains transmembrane domains (TMD), which form a pore in the inner membrane, and an ATP-binding domain (NBD), which is responsible for energy generation. Confers resistance against macrolides. In Shewanella sp. (strain ANA-3), this protein is Macrolide export ATP-binding/permease protein MacB.